The following is a 409-amino-acid chain: DNA replication and repair protein RecF (409 aa).

Residue 30 to 37 (GSNGHGKT) coordinates ATP.

The protein belongs to the RecF family.

The protein resides in the cytoplasm. The RecF protein is involved in DNA metabolism; it is required for DNA replication and normal SOS inducibility. RecF binds preferentially to single-stranded, linear DNA. It also seems to bind ATP. The polypeptide is DNA replication and repair protein RecF (Rhodococcus erythropolis (strain PR4 / NBRC 100887)).